Reading from the N-terminus, the 78-residue chain is Delta-conotoxin-like S6.8 (78 aa).

An N-terminal signal peptide occupies residues 1-22; the sequence is MKLTCMMIVAVLFLTAWTFVTA. The propeptide occupies 23-53; sequence DDSRNGLKNLFPKARHEMKNPDASKLNKRDG. Intrachain disulfides connect Cys54/Cys69, Cys61/Cys73, and Cys68/Cys77.

This sequence belongs to the conotoxin O1 superfamily. In terms of tissue distribution, expressed by the venom duct.

The protein resides in the secreted. Its function is as follows. Delta-conotoxins bind to site 6 of voltage-gated sodium channels (Nav) and inhibit the inactivation process. In Conus striatus (Striated cone), this protein is Delta-conotoxin-like S6.8.